Consider the following 316-residue polypeptide: ATP synthase gamma chain (316 aa).

The protein belongs to the ATPase gamma chain family. In terms of assembly, F-type ATPases have 2 components, CF(1) - the catalytic core - and CF(0) - the membrane proton channel. CF(1) has five subunits: alpha(3), beta(3), gamma(1), delta(1), epsilon(1). CF(0) has three main subunits: a, b and c.

The protein resides in the cellular thylakoid membrane. Its function is as follows. Produces ATP from ADP in the presence of a proton gradient across the membrane. The gamma chain is believed to be important in regulating ATPase activity and the flow of protons through the CF(0) complex. The polypeptide is ATP synthase gamma chain (Prochlorococcus marinus (strain MIT 9211)).